Reading from the N-terminus, the 285-residue chain is Flagellar filament 30.7 kDa core protein (285 aa).

Belongs to the bacterial flagellin family. The core of the flagellum consists of several antigenically related polypeptides. Post-translationally, glycosylated. Glycosylation is not essential for motility.

It is found in the periplasmic flagellum. The protein localises to the periplasm. Component of the core of the flagella. This Treponema maltophilum protein is Flagellar filament 30.7 kDa core protein (flaB3).